A 1122-amino-acid polypeptide reads, in one-letter code: Adhesin P1 (1122 aa).

Positions 1–26 (MKKLIFKLSVGITPLALIGLGSFGLA) are cleaved as a signal peptide. 3 disordered regions span residues 182 to 208 (ATGD…GGGA), 244 to 273 (DYNS…GGRT), and 541 to 562 (GALQ…SNGN). A compositionally biased stretch (gly residues) spans 195 to 208 (AGGGSSSSAAGGGA). Residues 259 to 273 (LDSSESSESINGGRT) are compositionally biased toward polar residues. A helical membrane pass occupies residues 1001–1021 (AISIPIIIIALALALGLGIGI). Residues 1066–1122 (KTPQMLQANKKDGASSPSKPSAPAAKKPAGPTKPSAPGAKPTAPAKPKAPAPTKKIE) form a disordered region. The segment covering 1079-1122 (ASSPSKPSAPAAKKPAGPTKPSAPGAKPTAPAKPKAPAPTKKIE) has biased composition (low complexity).

It belongs to the adhesin P1 family.

It is found in the cell membrane. In terms of biological role, could be involved in cytadherence. This Mycoplasmoides gallisepticum (strain R(low / passage 15 / clone 2)) (Mycoplasma gallisepticum) protein is Adhesin P1 (gapA).